The sequence spans 154 residues: 6,7-dimethyl-8-ribityllumazine synthase (154 aa).

5-amino-6-(D-ribitylamino)uracil is bound by residues F22, 56–58, and 80–82; these read AFE and AVI. 85-86 contacts (2S)-2-hydroxy-3-oxobutyl phosphate; the sequence is AT. H88 (proton donor) is an active-site residue. 5-amino-6-(D-ribitylamino)uracil is bound at residue F113. R127 contributes to the (2S)-2-hydroxy-3-oxobutyl phosphate binding site.

This sequence belongs to the DMRL synthase family.

It carries out the reaction (2S)-2-hydroxy-3-oxobutyl phosphate + 5-amino-6-(D-ribitylamino)uracil = 6,7-dimethyl-8-(1-D-ribityl)lumazine + phosphate + 2 H2O + H(+). Its pathway is cofactor biosynthesis; riboflavin biosynthesis; riboflavin from 2-hydroxy-3-oxobutyl phosphate and 5-amino-6-(D-ribitylamino)uracil: step 1/2. Functionally, catalyzes the formation of 6,7-dimethyl-8-ribityllumazine by condensation of 5-amino-6-(D-ribitylamino)uracil with 3,4-dihydroxy-2-butanone 4-phosphate. This is the penultimate step in the biosynthesis of riboflavin. In Clostridium botulinum (strain 657 / Type Ba4), this protein is 6,7-dimethyl-8-ribityllumazine synthase.